The chain runs to 155 residues: 3-hydroxyacyl-[acyl-carrier-protein] dehydratase FabZ (155 aa).

Histidine 58 is a catalytic residue.

This sequence belongs to the thioester dehydratase family. FabZ subfamily.

It localises to the cytoplasm. The enzyme catalyses a (3R)-hydroxyacyl-[ACP] = a (2E)-enoyl-[ACP] + H2O. Its function is as follows. Involved in unsaturated fatty acids biosynthesis. Catalyzes the dehydration of short chain beta-hydroxyacyl-ACPs and long chain saturated and unsaturated beta-hydroxyacyl-ACPs. This chain is 3-hydroxyacyl-[acyl-carrier-protein] dehydratase FabZ, found in Alkalilimnicola ehrlichii (strain ATCC BAA-1101 / DSM 17681 / MLHE-1).